The chain runs to 369 residues: Serine proteinase inhibitor 1 (369 aa).

Belongs to the serpin family. Poxviruses subfamily.

In terms of biological role, important in virulence. This Oryctolagus cuniculus (Rabbit) protein is Serine proteinase inhibitor 1 (SPI-1).